A 93-amino-acid chain; its full sequence is UPF0147 protein PH1921.2 (93 aa).

This sequence belongs to the UPF0147 family.

The polypeptide is UPF0147 protein PH1921.2 (Pyrococcus horikoshii (strain ATCC 700860 / DSM 12428 / JCM 9974 / NBRC 100139 / OT-3)).